The sequence spans 208 residues: Methionine-R-sulfoxide reductase B1 (208 aa).

The segment covering 27-36 (QDSDNPDKRY) has biased composition (basic and acidic residues). The tract at residues 27–48 (QDSDNPDKRYSGPAATMDNKSE) is disordered. Residues 54–188 (KEELRKRLTP…NSASIEFVNA (135 aa)) enclose the MsrB domain. 4 residues coordinate Zn(2+): cysteine 93, cysteine 96, cysteine 154, and cysteine 157. An intrachain disulfide couples cysteine 111 to cysteine 177. Cysteine 177 (nucleophile) is an active-site residue. The disordered stretch occupies residues 189 to 208 (DPATSSPPVATPTAAPIAQQ).

This sequence belongs to the MsrB Met sulfoxide reductase family. It depends on Zn(2+) as a cofactor. Present in the embryonic nervous system (brain and cord) in neuronal cell bodies, along axons. Also present in embryonic muscles in motor axons. Localizes to growing bristle tips where it is distributed in small puntae. Present at and at sites of actin localization.

Its subcellular location is the cytoplasm. It is found in the nucleus. The protein localises to the cytoskeleton. The enzyme catalyses L-methionyl-[protein] + [thioredoxin]-disulfide + H2O = L-methionyl-(R)-S-oxide-[protein] + [thioredoxin]-dithiol. In terms of biological role, methionine-sulfoxide reductase that specifically reduces methionine (R)-sulfoxide back to methionine. While in many cases methionine oxidation is the result of random oxidation following oxidative stress, methionine oxidation is also a post-translational modification that takes place on specific residues. Acts as a regulator of actin assembly by reducing methionine (R)-sulfoxide mediated by Mical on actin thereby promoting filament repolymerization. This is Methionine-R-sulfoxide reductase B1 (SelR) from Drosophila melanogaster (Fruit fly).